Consider the following 555-residue polypeptide: Urocanate hydratase (555 aa).

NAD(+)-binding positions include 53–54, glutamine 131, 177–179, glutamate 197, arginine 202, 243–244, 264–268, 274–275, and tyrosine 323; these read GG, GMG, NA, QTSAH, and YL. Cysteine 411 is an active-site residue. Residue glycine 493 coordinates NAD(+).

Belongs to the urocanase family. The cofactor is NAD(+).

The protein resides in the cytoplasm. It catalyses the reaction 4-imidazolone-5-propanoate = trans-urocanate + H2O. The protein operates within amino-acid degradation; L-histidine degradation into L-glutamate; N-formimidoyl-L-glutamate from L-histidine: step 2/3. Functionally, catalyzes the conversion of urocanate to 4-imidazolone-5-propionate. The chain is Urocanate hydratase from Maricaulis maris (strain MCS10) (Caulobacter maris).